Here is a 657-residue protein sequence, read N- to C-terminus: Pyoverdine export ATP-binding/permease protein PvdT (657 aa).

Residues 6-245 (IDLRNIRKSY…LSANAGALQA (240 aa)) enclose the ABC transporter domain. ATP is bound at residue 43–50 (GASGSGKS). 4 helical membrane-spanning segments follow: residues 285–305 (ALTL…LAVG), 532–552 (LSLM…IGVM), 590–610 (LSVV…GILI), and 620–640 (LAAV…FGFM).

This sequence belongs to the ABC transporter superfamily. Macrolide exporter (TC 3.A.1.122) family. As to quaternary structure, part of the tripartite efflux system PvdRT-OpmQ, which is composed of an inner membrane component with both ATPase and permease domains, PvdT, a periplasmic membrane fusion protein, PvdR, and an outer membrane component, OpmQ.

Its subcellular location is the cell inner membrane. In terms of biological role, part of the tripartite efflux system PvdRT-OpmQ required for the secretion into the extracellular milieu of the siderophore pyoverdine (PVD), which is involved in iron acquisition. This subunit binds PVD and drives its secretion by hydrolyzing ATP. The system is responsible for export of newly synthesized PVD after the final steps of biosynthesis have taken place in the periplasm. It is also responsible for recycling of PVD after internalization of ferri-PVD into the periplasm by the outer-membrane receptor FpvA and release of iron from PVD, thus making PVD available for new cycles of iron uptake. This chain is Pyoverdine export ATP-binding/permease protein PvdT, found in Pseudomonas fluorescens (strain ATCC BAA-477 / NRRL B-23932 / Pf-5).